A 327-amino-acid chain; its full sequence is Tryptophan--tRNA ligase (327 aa).

ATP is bound by residues 9–11 (QPS) and 17–18 (GN). The 'HIGH' region signature appears at 10-18 (PSGDIHIGN). Asp-132 is a binding site for L-tryptophan. ATP-binding positions include 144–146 (GED), Ile-183, and 192–196 (KMSKS). The short motif at 192 to 196 (KMSKS) is the 'KMSKS' region element.

This sequence belongs to the class-I aminoacyl-tRNA synthetase family. As to quaternary structure, homodimer.

The protein resides in the cytoplasm. The catalysed reaction is tRNA(Trp) + L-tryptophan + ATP = L-tryptophyl-tRNA(Trp) + AMP + diphosphate + H(+). Catalyzes the attachment of tryptophan to tRNA(Trp). The sequence is that of Tryptophan--tRNA ligase from Caldanaerobacter subterraneus subsp. tengcongensis (strain DSM 15242 / JCM 11007 / NBRC 100824 / MB4) (Thermoanaerobacter tengcongensis).